A 137-amino-acid chain; its full sequence is Putative transcription elongation factor S-II-like protein 055R (137 aa).

A TFIIS-type zinc finger spans residues 85–136 (DFITCPYEVSEGVLRCGKCDCTKILWFSKQTRSMDEPTTIFASCSNCKTRWT). Zn(2+) contacts are provided by Cys-89, Cys-103, Cys-128, and Cys-131.

Belongs to the IIV-6 349L family.

The polypeptide is Putative transcription elongation factor S-II-like protein 055R (Aedes vexans (Inland floodwater mosquito)).